Reading from the N-terminus, the 558-residue chain is ATP-dependent RNA helicase ROK1 (558 aa).

The tract at residues 26–91 (PSAKQQQYEQ…EEAPPLEIQT (66 aa)) is disordered. Basic and acidic residues-rich tracts occupy residues 34–53 (EQHK…DFFH) and 64–81 (DSTD…KKED). The short motif at 120 to 148 (DMIGRFRLDSKLLSNLLEAEFVEPTAIQC) is the Q motif element. A Helicase ATP-binding domain is found at 151–329 (LPISLSGRDL…HSIMRDPIRV (179 aa)). 164–171 (APTGSGKT) serves as a coordination point for ATP. The DEAD box motif lies at 276–279 (DEAD). A Helicase C-terminal domain is found at 340 to 504 (TIDQKLVFTG…GFSGWMENMT (165 aa)). Residues 509–558 (NEKKKVKHKEIDRKDISTVPKLVKHKRKQREQMIEASKKRKQEETRNALQ) form a disordered region. Over residues 538–558 (REQMIEASKKRKQEETRNALQ) the composition is skewed to basic and acidic residues.

Belongs to the DEAD box helicase family. DDX52/ROK1 subfamily. Interacts with the U3 snoRNA and is associated with the 90S and 40S pre-ribosomes.

Its subcellular location is the nucleus. It localises to the nucleolus. The catalysed reaction is ATP + H2O = ADP + phosphate + H(+). In terms of biological role, ATP-dependent RNA helicase involved in 40S ribosomal subunit biogenesis. Required for the processing and cleavage of 35S pre-rRNA at sites A0, A1, and A2, leading to mature 18S rRNA. This chain is ATP-dependent RNA helicase ROK1 (ROK1), found in Scheffersomyces stipitis (strain ATCC 58785 / CBS 6054 / NBRC 10063 / NRRL Y-11545) (Yeast).